The primary structure comprises 400 residues: Enoyl-[acyl-carrier-protein] reductase [NADH] (400 aa).

NAD(+)-binding positions include 48 to 53 (GSSSGY), 74 to 75 (FE), 111 to 112 (DA), and 139 to 140 (LA). A substrate-binding site is contributed by Tyr225. Catalysis depends on Tyr235, which acts as the Proton donor. NAD(+) is bound by residues Lys244 and 273–275 (VVT).

This sequence belongs to the TER reductase family. As to quaternary structure, monomer.

It catalyses the reaction a 2,3-saturated acyl-[ACP] + NAD(+) = a (2E)-enoyl-[ACP] + NADH + H(+). The protein operates within lipid metabolism; fatty acid biosynthesis. In terms of biological role, involved in the final reduction of the elongation cycle of fatty acid synthesis (FAS II). Catalyzes the reduction of a carbon-carbon double bond in an enoyl moiety that is covalently linked to an acyl carrier protein (ACP). In Shewanella frigidimarina (strain NCIMB 400), this protein is Enoyl-[acyl-carrier-protein] reductase [NADH].